Here is a 286-residue protein sequence, read N- to C-terminus: Beta-lactamase TEM (286 aa).

Residues 1–23 (MSIQHFRVALIPFFAAFCLPVFA) form the signal peptide. Catalysis depends on serine 68, which acts as the Acyl-ester intermediate. Residues cysteine 75 and cysteine 121 are joined by a disulfide bond. The active-site Proton acceptor is the glutamate 166. 232-234 (KSG) is a substrate binding site.

It belongs to the class-A beta-lactamase family.

It carries out the reaction a beta-lactam + H2O = a substituted beta-amino acid. Functionally, TEM-type are the most prevalent beta-lactamases in enterobacteria; they hydrolyze the beta-lactam bond in susceptible beta-lactam antibiotics, thus conferring resistance to penicillins and cephalosporins. TEM-3 and TEM-4 are capable of hydrolyzing cefotaxime and ceftazidime. TEM-5 is capable of hydrolyzing ceftazidime. TEM-6 is capable of hydrolyzing ceftazidime and aztreonam. TEM-8/CAZ-2, TEM-16/CAZ-7 and TEM-24/CAZ-6 are markedly active against ceftazidime. IRT-4 shows resistance to beta-lactamase inhibitors. The chain is Beta-lactamase TEM (bla) from Escherichia coli.